We begin with the raw amino-acid sequence, 270 residues long: Putative phosphoenolpyruvate synthase regulatory protein (270 aa).

Position 150–157 (150–157 (GVSRCGKT)) interacts with ADP.

This sequence belongs to the pyruvate, phosphate/water dikinase regulatory protein family. PSRP subfamily.

The enzyme catalyses [pyruvate, water dikinase] + ADP = [pyruvate, water dikinase]-phosphate + AMP + H(+). It carries out the reaction [pyruvate, water dikinase]-phosphate + phosphate + H(+) = [pyruvate, water dikinase] + diphosphate. Bifunctional serine/threonine kinase and phosphorylase involved in the regulation of the phosphoenolpyruvate synthase (PEPS) by catalyzing its phosphorylation/dephosphorylation. This Shewanella putrefaciens (strain CN-32 / ATCC BAA-453) protein is Putative phosphoenolpyruvate synthase regulatory protein.